A 254-amino-acid chain; its full sequence is 4-hydroxy-tetrahydrodipicolinate reductase (254 aa).

Residue glycine 7–isoleucine 12 participates in NAD(+) binding. Arginine 35 serves as a coordination point for NADP(+). Residues glycine 91 to threonine 93 and alanine 115 to methionine 118 contribute to the NAD(+) site. Histidine 147 (proton donor/acceptor) is an active-site residue. Histidine 148 serves as a coordination point for (S)-2,3,4,5-tetrahydrodipicolinate. Residue lysine 151 is the Proton donor of the active site. Glycine 157 to threonine 158 serves as a coordination point for (S)-2,3,4,5-tetrahydrodipicolinate.

This sequence belongs to the DapB family.

It localises to the cytoplasm. The catalysed reaction is (S)-2,3,4,5-tetrahydrodipicolinate + NAD(+) + H2O = (2S,4S)-4-hydroxy-2,3,4,5-tetrahydrodipicolinate + NADH + H(+). It carries out the reaction (S)-2,3,4,5-tetrahydrodipicolinate + NADP(+) + H2O = (2S,4S)-4-hydroxy-2,3,4,5-tetrahydrodipicolinate + NADPH + H(+). It functions in the pathway amino-acid biosynthesis; L-lysine biosynthesis via DAP pathway; (S)-tetrahydrodipicolinate from L-aspartate: step 4/4. In terms of biological role, catalyzes the conversion of 4-hydroxy-tetrahydrodipicolinate (HTPA) to tetrahydrodipicolinate. The sequence is that of 4-hydroxy-tetrahydrodipicolinate reductase from Helicobacter acinonychis (strain Sheeba).